Reading from the N-terminus, the 408-residue chain is Serine/threonine-protein kinase UCNL (408 aa).

In terms of domain architecture, Protein kinase spans 21 to 341; sequence IKALKILGKG…AAEIKELAFF (321 aa). Residues 27–35 and Lys-54 each bind ATP; that span reads LGKGATGTV. The Proton acceptor role is filled by Asp-152. The 67-residue stretch at 342-408 folds into the AGC-kinase C-terminal domain; it reads AGVRWDLLTE…CRKNDPFIEF (67 aa).

The protein belongs to the protein kinase superfamily. AGC Ser/Thr protein kinase family. In terms of tissue distribution, expressed in the epidermis and cortex of the transition zone of the root apex. Expressed in rosette leaves, stems, flowers and siliques.

The protein resides in the cytoplasm. The protein localises to the nucleus. The catalysed reaction is L-seryl-[protein] + ATP = O-phospho-L-seryl-[protein] + ADP + H(+). It carries out the reaction L-threonyl-[protein] + ATP = O-phospho-L-threonyl-[protein] + ADP + H(+). In terms of biological role, regulates planar ovule integument development. The sequence is that of Serine/threonine-protein kinase UCNL from Arabidopsis thaliana (Mouse-ear cress).